The chain runs to 652 residues: Iron-regulated outer membrane virulence protein (652 aa).

The first 25 residues, 1–25 (MSRFNPSPVSLSVTLGLMFSASAFA), serve as a signal peptide directing secretion. The TonB box signature appears at 33–40 (ETMVVTAA). Positions 45–162 (VIQNAPASIS…IGGVINIITR (118 aa)) constitute a TBDR plug domain. Residues 167–652 (QWSGNVQLST…RYWLGLDIAF (486 aa)) form the TBDR beta-barrel domain. Residues 635–652 (YGYVEDGRRYWLGLDIAF) carry the TonB C-terminal box motif.

The protein belongs to the TonB-dependent receptor family.

It localises to the cell outer membrane. Functionally, involved in the initial step of iron uptake by binding ferric vibriobactin, an iron chelatin siderophore that allows V.cholerae to extract iron from the environment. The chain is Iron-regulated outer membrane virulence protein (irgA) from Vibrio cholerae serotype O1 (strain ATCC 39315 / El Tor Inaba N16961).